The primary structure comprises 298 residues: Protease HtpX homolog (298 aa).

The next 2 membrane-spanning stretches (helical) occupy residues 15-35 (YVMIGFAILVLFIGAAVGYVF) and 39-59 (AMAGIIMAAVIAAIYMAMMIA). Residue histidine 143 participates in Zn(2+) binding. Glutamate 144 is an active-site residue. Histidine 147 contacts Zn(2+). The next 2 membrane-spanning stretches (helical) occupy residues 158-178 (IALALSSAIAMLVNIGMRSFW) and 197-217 (IVMMIISIVLVILGPIATTIA). A Zn(2+)-binding site is contributed by glutamate 226.

This sequence belongs to the peptidase M48B family. The cofactor is Zn(2+).

It localises to the cell membrane. This chain is Protease HtpX homolog, found in Pediococcus pentosaceus (strain ATCC 25745 / CCUG 21536 / LMG 10740 / 183-1w).